A 193-amino-acid chain; its full sequence is DNA damage-inducible transcript 4-like protein (193 aa).

Belongs to the DDIT4 family.

It localises to the cytoplasm. In terms of biological role, inhibits cell growth by regulating the TOR signaling pathway upstream of the TSC1-TSC2 complex and downstream of AKT1. This is DNA damage-inducible transcript 4-like protein (DDIT4L) from Pongo abelii (Sumatran orangutan).